The chain runs to 310 residues: Transcription initiation factor TFIID subunit 8 (310 aa).

Positions 1–30 are disordered; that stretch reads MADAAATAGAGGSGTRSGSKQSTNPADNYH. A2 carries the N-acetylalanine modification. In terms of domain architecture, Histone-fold; involved in forming hexamer structure in TFIID complex spans 35 to 102; sequence RTLQVVVSSL…IVVTLVEMGF (68 aa). T130 is subject to Phosphothreonine. The interval 262–310 is disordered; the sequence is DSGAEKENTSVLQQNPSLSGSRNGEENIIDNPYLRPVKKPKIRRKKSLS. The segment covering 270 to 283 has biased composition (polar residues); sequence TSVLQQNPSLSGSR. Residue S271 is modified to Phosphoserine. The Nuclear localization signal motif lies at 294-307; the sequence is YLRPVKKPKIRRKK. Over residues 297–310 the composition is skewed to basic residues; sequence PVKKPKIRRKKSLS.

It belongs to the TAF8 family. Component of the TFIID basal transcription factor complex, composed of TATA-box-binding protein TBP, and a number of TBP-associated factors (TAFs), including TAF1, TAF2, TAF3, TAF4, TAF5, TAF6, TAF7, TAF8, TAF9, TAF10, TAF11, TAF12 and TAF13. Interacts with TBP, TAF1, TAF6, TAF10, TAF11 and TAF13. Component also of a small TAF complex (SMAT) containing TAF8, TAF10 and SUPT7L. Forms a heterodimer with TAF10. Interaction with TAF10 is mediated mainly via its histone fold domain while interaction with SUPT7L is via its C-terminal region.

It localises to the nucleus. The protein resides in the cytoplasm. Functionally, the TFIID basal transcription factor complex plays a major role in the initiation of RNA polymerase II (Pol II)-dependent transcription. TFIID recognizes and binds promoters with or without a TATA box via its subunit TBP, a TATA-box-binding protein, and promotes assembly of the pre-initiation complex (PIC). The TFIID complex consists of TBP and TBP-associated factors (TAFs), including TAF1, TAF2, TAF3, TAF4, TAF5, TAF6, TAF7, TAF8, TAF9, TAF10, TAF11, TAF12 and TAF13. The TFIID complex structure can be divided into 3 modules TFIID-A, TFIID-B, and TFIID-C. TAF8 is involved in forming the TFIID-B module, together with TAF5. Mediates both basal and activator-dependent transcription. Plays a role in the differentiation of preadipocyte fibroblasts to adipocytes, however, does not seem to play a role in differentiation of myoblasts. Required for the integration of TAF10 in the TAF complex. May be important for survival of cells of the inner cell mass which constitute the pluripotent cell population of the early embryo. The protein is Transcription initiation factor TFIID subunit 8 (TAF8) of Homo sapiens (Human).